The primary structure comprises 47 residues: Fasciclin-like arabinogalactan protein (47 aa).

The FAS1 domain occupies Ala1–Arg47.

It belongs to the fasciclin-like AGP family.

In terms of biological role, may be a cell surface adhesion protein. The sequence is that of Fasciclin-like arabinogalactan protein from Jatropha curcas (Barbados nut).